The primary structure comprises 92 residues: Small ribosomal subunit protein uS19c (92 aa).

It belongs to the universal ribosomal protein uS19 family.

It is found in the plastid. It localises to the cyanelle. Functionally, protein S19 forms a complex with S13 that binds strongly to the 16S ribosomal RNA. The protein is Small ribosomal subunit protein uS19c (rps19) of Cyanophora paradoxa.